A 99-amino-acid chain; its full sequence is Transmembrane protein 14A (99 aa).

Helical transmembrane passes span 1-21 (MDLIGFGYAALVTFGSILGYK), 24-44 (GGVPSLIAGLFVGFLAGYGAY), and 79-99 (PAGLVAGLSLLMILRLVLLLL).

It belongs to the TMEM14 family.

The protein resides in the mitochondrion membrane. The protein localises to the endoplasmic reticulum membrane. Inhibits apoptosis via negative regulation of the mitochondrial outer membrane permeabilization involved in apoptotic signaling pathway. This Sus scrofa (Pig) protein is Transmembrane protein 14A (TMEM14A).